Reading from the N-terminus, the 276-residue chain is Large ribosomal subunit protein uL2 (276 aa).

2 disordered regions span residues 37 to 59 (QFQK…GGHK) and 225 to 276 (VMNP…RHKR). Residues 39–49 (QKSGRNNNGHI) show a composition bias toward polar residues. Positions 50 to 59 (TTRHKGGGHK) are enriched in basic residues.

This sequence belongs to the universal ribosomal protein uL2 family. In terms of assembly, part of the 50S ribosomal subunit. Forms a bridge to the 30S subunit in the 70S ribosome.

Its function is as follows. One of the primary rRNA binding proteins. Required for association of the 30S and 50S subunits to form the 70S ribosome, for tRNA binding and peptide bond formation. It has been suggested to have peptidyltransferase activity; this is somewhat controversial. Makes several contacts with the 16S rRNA in the 70S ribosome. The chain is Large ribosomal subunit protein uL2 from Cupriavidus pinatubonensis (strain JMP 134 / LMG 1197) (Cupriavidus necator (strain JMP 134)).